We begin with the raw amino-acid sequence, 219 residues long: Guanylate kinase (219 aa).

One can recognise a Guanylate kinase-like domain in the interval 15–194 (GLMFVLSSPS…AFAEVHSILK (180 aa)). Residue 22–29 (SPSGAGKT) participates in ATP binding.

Belongs to the guanylate kinase family.

The protein localises to the cytoplasm. It catalyses the reaction GMP + ATP = GDP + ADP. Functionally, essential for recycling GMP and indirectly, cGMP. The protein is Guanylate kinase of Rhodopseudomonas palustris (strain BisB18).